Reading from the N-terminus, the 402-residue chain is Prophage integrase IntZ (402 aa).

The Core-binding (CB) domain maps to 103–183; the sequence is AGFKKVAEDW…RIGEIFKFAV (81 aa). One can recognise a Tyr recombinase domain in the interval 206-381; that stretch reads GHNAWIPISE…AYLKQRRAMM (176 aa). Active-site residues include Arg-244, Lys-271, His-332, Arg-335, and His-359. The active-site O-(3'-phospho-DNA)-tyrosine intermediate is the Tyr-368.

Belongs to the 'phage' integrase family.

Integrase is necessary for integration of the phage into the host genome by site-specific recombination. In conjunction with excisionase, integrase is also necessary for excision of the prophage from the host genome. In Escherichia coli (strain K12), this protein is Prophage integrase IntZ (intZ).